Reading from the N-terminus, the 558-residue chain is Oxygen-dependent choline dehydrogenase (558 aa).

4 to 33 (DYIIIGAGSAGNVLATRLTEDSDTTVLLLE) is an FAD binding site. Residue His473 is the Proton acceptor of the active site.

It belongs to the GMC oxidoreductase family. The cofactor is FAD.

It catalyses the reaction choline + A = betaine aldehyde + AH2. The catalysed reaction is betaine aldehyde + NAD(+) + H2O = glycine betaine + NADH + 2 H(+). Its pathway is amine and polyamine biosynthesis; betaine biosynthesis via choline pathway; betaine aldehyde from choline (cytochrome c reductase route): step 1/1. Its function is as follows. Involved in the biosynthesis of the osmoprotectant glycine betaine. Catalyzes the oxidation of choline to betaine aldehyde and betaine aldehyde to glycine betaine at the same rate. The polypeptide is Oxygen-dependent choline dehydrogenase (Citrobacter koseri (strain ATCC BAA-895 / CDC 4225-83 / SGSC4696)).